The chain runs to 260 residues: DNA-binding protein RFXANK (260 aa).

A disordered region spans residues Met1–Gly79. The segment covering Gly22 to Asp33 has biased composition (acidic residues). Over residues Ser57 to Gln77 the composition is skewed to polar residues. ANK repeat units follow at residues Leu89–Asn118, Arg123–Ile152, Glu156–Ile185, Asn189–Thr218, and Ser222–Gln251.

As to quaternary structure, forms homodimers. The RFX heterotetrameric complex consists of 2 molecules of RFX5 and one each of RFXAP and RFX-B/RFXANK; with each subunit representing a separate complementation group. Interacts (via ankyrin repeats) with RFX5 (via PxLPxI/L motif); the interaction is direct. RFX forms cooperative DNA binding complexes with X2BP and CBF/NF-Y. RFX associates with CIITA to form an active transcriptional complex. Interacts with RAF1. Interacts (via ankyrin repeats) with RFX7 (via PxLPxI/L motif). Post-translationally, phosphorylated by RAF1. Ubiquitous.

It localises to the cytoplasm. It is found in the nucleus. Its function is as follows. Activates transcription from class II MHC promoters. Activation requires the activity of the MHC class II transactivator/CIITA. May regulate other genes in the cell. RFX binds the X1 box of MHC-II promoters. May also potentiate the activation of RAF1. Functionally, isoform 2 is not involved in the positive regulation of MHC class II genes. In Homo sapiens (Human), this protein is DNA-binding protein RFXANK (RFXANK).